Consider the following 173-residue polypeptide: Co-chaperone protein HscB (173 aa).

The region spanning 2–74 (DYFTLFGLPA…LKRAEYMLSQ (73 aa)) is the J domain.

It belongs to the HscB family. Interacts with HscA and stimulates its ATPase activity. Interacts with IscU.

Its function is as follows. Co-chaperone involved in the maturation of iron-sulfur cluster-containing proteins. Seems to help targeting proteins to be folded toward HscA. The sequence is that of Co-chaperone protein HscB from Xenorhabdus nematophila (strain ATCC 19061 / DSM 3370 / CCUG 14189 / LMG 1036 / NCIMB 9965 / AN6).